The chain runs to 82 residues: Sec-independent protein translocase protein TatA (82 aa).

A helical membrane pass occupies residues 1–21 (MGGISIWQLLIIAVIIVLLFG). Residues 46–82 (DEPAKDAKKDADFVPQNLEKKEAETVEKQKQNDKEQA) are disordered.

Belongs to the TatA/E family. The Tat system comprises two distinct complexes: a TatABC complex, containing multiple copies of TatA, TatB and TatC subunits, and a separate TatA complex, containing only TatA subunits. Substrates initially bind to the TatABC complex, which probably triggers association of the separate TatA complex to form the active translocon.

The protein resides in the cell inner membrane. Functionally, part of the twin-arginine translocation (Tat) system that transports large folded proteins containing a characteristic twin-arginine motif in their signal peptide across membranes. TatA could form the protein-conducting channel of the Tat system. This Aliivibrio fischeri (strain MJ11) (Vibrio fischeri) protein is Sec-independent protein translocase protein TatA.